The following is a 204-amino-acid chain: Holliday junction branch migration complex subunit RuvA (204 aa).

Positions 1–64 (MIGRLQGKLI…EDAHLLFGFS (64 aa)) are domain I. A domain II region spans residues 65 to 143 (TKTDRTLFRE…GLRQPDFFVE (79 aa)). The segment at 144–155 (SKHITVPDIVSA) is flexible linker. The tract at residues 156–204 (EKETPNDEAVAALVALGYKPPEAAKMVKKVANGDLTSEQLIREALKAAL) is domain III.

It belongs to the RuvA family. In terms of assembly, homotetramer. Forms an RuvA(8)-RuvB(12)-Holliday junction (HJ) complex. HJ DNA is sandwiched between 2 RuvA tetramers; dsDNA enters through RuvA and exits via RuvB. An RuvB hexamer assembles on each DNA strand where it exits the tetramer. Each RuvB hexamer is contacted by two RuvA subunits (via domain III) on 2 adjacent RuvB subunits; this complex drives branch migration. In the full resolvosome a probable DNA-RuvA(4)-RuvB(12)-RuvC(2) complex forms which resolves the HJ.

Its subcellular location is the cytoplasm. In terms of biological role, the RuvA-RuvB-RuvC complex processes Holliday junction (HJ) DNA during genetic recombination and DNA repair, while the RuvA-RuvB complex plays an important role in the rescue of blocked DNA replication forks via replication fork reversal (RFR). RuvA specifically binds to HJ cruciform DNA, conferring on it an open structure. The RuvB hexamer acts as an ATP-dependent pump, pulling dsDNA into and through the RuvAB complex. HJ branch migration allows RuvC to scan DNA until it finds its consensus sequence, where it cleaves and resolves the cruciform DNA. This chain is Holliday junction branch migration complex subunit RuvA, found in Actinobacillus succinogenes (strain ATCC 55618 / DSM 22257 / CCUG 43843 / 130Z).